A 250-amino-acid polypeptide reads, in one-letter code: Leucyl/phenylalanyl-tRNA--protein transferase (250 aa).

This sequence belongs to the L/F-transferase family.

Its subcellular location is the cytoplasm. The catalysed reaction is N-terminal L-lysyl-[protein] + L-leucyl-tRNA(Leu) = N-terminal L-leucyl-L-lysyl-[protein] + tRNA(Leu) + H(+). It catalyses the reaction N-terminal L-arginyl-[protein] + L-leucyl-tRNA(Leu) = N-terminal L-leucyl-L-arginyl-[protein] + tRNA(Leu) + H(+). It carries out the reaction L-phenylalanyl-tRNA(Phe) + an N-terminal L-alpha-aminoacyl-[protein] = an N-terminal L-phenylalanyl-L-alpha-aminoacyl-[protein] + tRNA(Phe). Functionally, functions in the N-end rule pathway of protein degradation where it conjugates Leu, Phe and, less efficiently, Met from aminoacyl-tRNAs to the N-termini of proteins containing an N-terminal arginine or lysine. This chain is Leucyl/phenylalanyl-tRNA--protein transferase, found in Xanthomonas oryzae pv. oryzae (strain MAFF 311018).